Here is a 449-residue protein sequence, read N- to C-terminus: Tubulin alpha chain (449 aa).

The short motif at 1-4 (MREC) is the MREC motif element. Position 11 (Q11) interacts with GTP. K40 carries the post-translational modification N6-acetyllysine. E71, S140, G144, T145, T179, N206, and N228 together coordinate GTP. E71 provides a ligand contact to Mg(2+). E254 is a catalytic residue. E443 is subject to 5-glutamyl polyglutamate.

The protein belongs to the tubulin family. As to quaternary structure, dimer of alpha and beta chains. A typical microtubule is a hollow water-filled tube with an outer diameter of 25 nm and an inner diameter of 15 nM. Alpha-beta heterodimers associate head-to-tail to form protofilaments running lengthwise along the microtubule wall with the beta-tubulin subunit facing the microtubule plus end conferring a structural polarity. Microtubules usually have 13 protofilaments but different protofilament numbers can be found in some organisms and specialized cells. The cofactor is Mg(2+). Some glutamate residues at the C-terminus are polyglycylated, resulting in polyglycine chains on the gamma-carboxyl group. Glycylation is mainly limited to tubulin incorporated into axonemes (cilia and flagella) whereas glutamylation is prevalent in neuronal cells, centrioles, axonemes, and the mitotic spindle. Both modifications can coexist on the same protein on adjacent residues, and lowering polyglycylation levels increases polyglutamylation, and reciprocally. The precise function of polyglycylation is still unclear. Post-translationally, some glutamate residues at the C-terminus are polyglutamylated, resulting in polyglutamate chains on the gamma-carboxyl group. Polyglutamylation plays a key role in microtubule severing by spastin (SPAST). SPAST preferentially recognizes and acts on microtubules decorated with short polyglutamate tails: severing activity by SPAST increases as the number of glutamates per tubulin rises from one to eight, but decreases beyond this glutamylation threshold. In terms of processing, acetylation of alpha chains at Lys-40 is located inside the microtubule lumen. This modification has been correlated with increased microtubule stability, intracellular transport and ciliary assembly. Undergoes a tyrosination/detyrosination cycle, the cyclic removal and re-addition of a C-terminal tyrosine residue by the enzymes tubulin tyrosine carboxypeptidase (MATCAP1, VASH1 or VASH2) and tubulin tyrosine ligase (TTL), respectively. Post-translationally, tyrosination promotes microtubule interaction with CAP-Gly microtubule plus-end tracking proteins. Tyrosinated tubulins regulate the initiation of dynein-driven motility. In terms of processing, detyrosination is involved in metaphase plate congression by guiding chromosomes during mitosis. Detyrosination increases microtubules-dependent mechanotransduction in dystrophic cardiac and skeletal muscle. In cardiomyocytes, detyrosinated microtubules are required to resist to contractile compression during contraction.

The protein resides in the cytoplasm. Its subcellular location is the cytoskeleton. The catalysed reaction is GTP + H2O = GDP + phosphate + H(+). Tubulin is the major constituent of microtubules, a cylinder consisting of laterally associated linear protofilaments composed of alpha- and beta-tubulin heterodimers. Microtubules grow by the addition of GTP-tubulin dimers to the microtubule end, where a stabilizing cap forms. Below the cap, tubulin dimers are in GDP-bound state, owing to GTPase activity of alpha-tubulin. The sequence is that of Tubulin alpha chain (tuba) from Xenopus tropicalis (Western clawed frog).